Consider the following 512-residue polypeptide: 2-isopropylmalate synthase (512 aa).

Residues 5–268 (LIIFDTTLRD…DLGIATQHIL (264 aa)) form the Pyruvate carboxyltransferase domain. The Mn(2+) site is built by D14, H202, H204, and N239. A regulatory domain region spans residues 394-512 (GFVSLFQQSE…NKADRVAAQG (119 aa)).

Belongs to the alpha-IPM synthase/homocitrate synthase family. LeuA type 1 subfamily. In terms of assembly, homodimer. The cofactor is Mn(2+).

Its subcellular location is the cytoplasm. It catalyses the reaction 3-methyl-2-oxobutanoate + acetyl-CoA + H2O = (2S)-2-isopropylmalate + CoA + H(+). It functions in the pathway amino-acid biosynthesis; L-leucine biosynthesis; L-leucine from 3-methyl-2-oxobutanoate: step 1/4. In terms of biological role, catalyzes the condensation of the acetyl group of acetyl-CoA with 3-methyl-2-oxobutanoate (2-ketoisovalerate) to form 3-carboxy-3-hydroxy-4-methylpentanoate (2-isopropylmalate). This Verminephrobacter eiseniae (strain EF01-2) protein is 2-isopropylmalate synthase.